We begin with the raw amino-acid sequence, 342 residues long: Phenylalanine--tRNA ligase alpha subunit (342 aa).

Residue glutamate 260 coordinates Mg(2+).

Belongs to the class-II aminoacyl-tRNA synthetase family. Phe-tRNA synthetase alpha subunit type 1 subfamily. In terms of assembly, tetramer of two alpha and two beta subunits. The cofactor is Mg(2+).

The protein resides in the cytoplasm. The catalysed reaction is tRNA(Phe) + L-phenylalanine + ATP = L-phenylalanyl-tRNA(Phe) + AMP + diphosphate + H(+). The chain is Phenylalanine--tRNA ligase alpha subunit from Nocardia farcinica (strain IFM 10152).